Reading from the N-terminus, the 237-residue chain is Ribosomal RNA small subunit methyltransferase G (237 aa).

S-adenosyl-L-methionine is bound by residues glycine 75, phenylalanine 80, 127–128, and arginine 146; that span reads AE.

It belongs to the methyltransferase superfamily. RNA methyltransferase RsmG family.

The protein localises to the cytoplasm. Its function is as follows. Specifically methylates the N7 position of a guanine in 16S rRNA. This chain is Ribosomal RNA small subunit methyltransferase G, found in Synechococcus sp. (strain RCC307).